Reading from the N-terminus, the 4625-residue chain is Dynein-1-alpha heavy chain, flagellar inner arm I1 complex (4625 aa).

Positions 1-1919 are stem; sequence MDRRLEWVKE…LIRQCTGLFK (1919 aa). Residues 70-84 are compositionally biased toward acidic residues; the sequence is EQAPEAEDGEGEEHD. Positions 70-163 are disordered; the sequence is EQAPEAEDGE…DEPPAPPAPK (94 aa). Residues 111–140 are compositionally biased toward low complexity; sequence EDAPAAAAEANGANPEDEAAAPADGAADGA. Residues 144-155 show a composition bias toward acidic residues; it reads GGEEGDGAEGDE. Residue 960–967 coordinates ATP; sequence AGTNSGKS. Coiled coils occupy residues 1227 to 1259 and 1339 to 1409; these read EELKQVLNTVNTIRGESMVMELRYADLEERYRT and TVEL…AVRQ. 4 AAA regions span residues 1920 to 2141, 2201 to 2437, 2550 to 2800, and 2906 to 3155; these read YGYE…VLVM, DVVE…RRPK, EPPA…IYEG, and NFYN…LRRY. ATP-binding positions include 1958–1965, 2242–2249, 2588–2595, and 2945–2952; these read GPAGTGKT, GQTGGGKT, GESGTAKS, and GVGGSGKQ. Coiled coils occupy residues 3192 to 3297 and 3400 to 3494; these read LEKL…IRSY and KRKK…LIGD. The segment at 3192–3494 is stalk; the sequence is LEKLIQAAVE…ESRRDRLIGD (303 aa). AAA stretches follow at residues 3542 to 3773 and 3998 to 4216; these read LTSD…EIAE and ITRF…LIST. An ATP-binding site is contributed by 3680-3687; that stretch reads GPEISGKT. Residues 3701–3788 are a coiled coil; that stretch reads EQLLNVTLRH…KVTAAEIEET (88 aa).

It belongs to the dynein heavy chain family. The I1 inner arm complex (also known as the f dynein complex) is a two-headed isoform composed of two heavy chains (1-alpha and 1-beta), three intermediate chains and three light chains. I1 occupies a specific position proximal to the first radial spoke and repeats every 96 nm along the length of the axoneme.

Its subcellular location is the cell projection. The protein localises to the cilium. It is found in the flagellum. The protein resides in the cytoplasm. It localises to the cytoskeleton. Its subcellular location is the flagellum axoneme. Force generating protein of eukaryotic cilia and flagella. Produces force towards the minus ends of microtubules. Dynein has ATPase activity; the force-producing power stroke is thought to occur on release of ADP. Required for assembly of the I1 inner arm complex and its targeting to the appropriate axoneme location. Also required for phototaxis. The sequence is that of Dynein-1-alpha heavy chain, flagellar inner arm I1 complex (DHC1) from Chlamydomonas reinhardtii (Chlamydomonas smithii).